A 607-amino-acid chain; its full sequence is MEAPVARLFLLLLLGSWTPAPGSASSEAPPLINEDVKRTVDLSSHLAKVTAEVVLAHLGGSSTSRATSFLLALEPELEARLAHLGVQVKGEDEEDNNLEVRETKIKGKSGRFFIVKLPVALDPGAKISVIVETVYTHVLQPYPTQITQSEKQFVVFEGNHYFYSPYPTKTQTMRVKLASRNVESYTKLGNPTRSEDLLDYGPFRDVPAYSQDTFKVHYENNSPFLTITSMTRVIEVSHWGNIAVEENVDLKHTGAVLKGPFSRYDYQRQPDSGISSIRSFKTILPAAAQDVYYRDEIGNVSTSHLLILDDSVEMEIRPRFPLFGGWKTHYIVGYNLPSYEYLYNLGDQYALKMRFVDHVFDEQVIDSLTVKIILPEGAKNIEIDSPYEISRAPDELHYTYLDTFGRPVIVAYKKNLVEQHIQDIVVHYTFNKVLMLQEPLLVVAAFYILFFTVIIYVRLDFSITKDPAAEARMKVACITEQVLTLVNKRIGLYRHFDETVNRYKQSRDISTLNSGKKSLETEHKALTSEIALLQSRLKTEGSDLCDRVSEMQKLDAQVKELVLKSAVEAERLVAGKLKKDTYIENEKLISGKRQELVTKIDHILDAL.

Residues 1–23 (MEAPVARLFLLLLLGSWTPAPGS) form the signal peptide. At 24 to 434 (ASSEAPPLIN…VVHYTFNKVL (411 aa)) the chain is on the lumenal side. An N6-acetyllysine modification is found at Lys187. A glycan (N-linked (GlcNAc...) asparagine) is linked at Asn299. A helical transmembrane segment spans residues 435 to 455 (MLQEPLLVVAAFYILFFTVII). Over 456 to 607 (YVRLDFSITK…TKIDHILDAL (152 aa)) the chain is Cytoplasmic. Residue Lys538 is modified to N6-acetyllysine; alternate. Lys538 participates in a covalent cross-link: Glycyl lysine isopeptide (Lys-Gly) (interchain with G-Cter in SUMO2); alternate.

Belongs to the OST1 family. In terms of assembly, component of the oligosaccharyltransferase (OST) complex. OST exists in two different complex forms which contain common core subunits RPN1, RPN2, OST48, OST4, DAD1 and TMEM258, either STT3A or STT3B as catalytic subunits, and form-specific accessory subunits. STT3A complex assembly occurs through the formation of 3 subcomplexes. Subcomplex 1 contains RPN1 and TMEM258, subcomplex 2 contains the STT3A-specific subunits STT3A, DC2/OSTC, and KCP2 as well as the core subunit OST4, and subcomplex 3 contains RPN2, DAD1, and OST48. The STT3A complex can form stable complexes with the Sec61 complex or with both the Sec61 and TRAP complexes. Interacts with TMEM35A/NACHO. Ubiquitinated by the ECS(ASB11) complex. Post-translationally, ufmylated by UFL1 in response to endoplasmic reticulum stress, promoting reticulophagy of endoplasmic reticulum sheets.

The protein localises to the endoplasmic reticulum membrane. Its pathway is protein modification; protein glycosylation. Subunit of the oligosaccharyl transferase (OST) complex that catalyzes the initial transfer of a defined glycan (Glc(3)Man(9)GlcNAc(2) in eukaryotes) from the lipid carrier dolichol-pyrophosphate to an asparagine residue within an Asn-X-Ser/Thr consensus motif in nascent polypeptide chains, the first step in protein N-glycosylation. N-glycosylation occurs cotranslationally and the complex associates with the Sec61 complex at the channel-forming translocon complex that mediates protein translocation across the endoplasmic reticulum (ER). All subunits are required for a maximal enzyme activity. The protein is Dolichyl-diphosphooligosaccharide--protein glycosyltransferase subunit 1 of Macaca fascicularis (Crab-eating macaque).